A 166-amino-acid chain; its full sequence is 2-C-methyl-D-erythritol 2,4-cyclodiphosphate synthase (166 aa).

Asp-12 and His-14 together coordinate a divalent metal cation. Residues 12 to 14 and 38 to 39 each bind 4-CDP-2-C-methyl-D-erythritol 2-phosphate; these read DVH and HS. Position 46 (His-46) interacts with a divalent metal cation. Residues 60 to 62, 136 to 139, Phe-143, and Arg-146 contribute to the 4-CDP-2-C-methyl-D-erythritol 2-phosphate site; these read DIG and TTSE.

Belongs to the IspF family. In terms of assembly, homotrimer. A divalent metal cation serves as cofactor.

The enzyme catalyses 4-CDP-2-C-methyl-D-erythritol 2-phosphate = 2-C-methyl-D-erythritol 2,4-cyclic diphosphate + CMP. The protein operates within isoprenoid biosynthesis; isopentenyl diphosphate biosynthesis via DXP pathway; isopentenyl diphosphate from 1-deoxy-D-xylulose 5-phosphate: step 4/6. Its function is as follows. Involved in the biosynthesis of isopentenyl diphosphate (IPP) and dimethylallyl diphosphate (DMAPP), two major building blocks of isoprenoid compounds. Catalyzes the conversion of 4-diphosphocytidyl-2-C-methyl-D-erythritol 2-phosphate (CDP-ME2P) to 2-C-methyl-D-erythritol 2,4-cyclodiphosphate (ME-CPP) with a corresponding release of cytidine 5-monophosphate (CMP). In Xanthomonas axonopodis pv. citri (strain 306), this protein is 2-C-methyl-D-erythritol 2,4-cyclodiphosphate synthase.